The following is a 260-amino-acid chain: 5'-nucleotidase SurE (260 aa).

Residues Asp8, Asp9, Ser39, and Asn96 each contribute to the a divalent metal cation site.

Belongs to the SurE nucleotidase family. A divalent metal cation serves as cofactor.

It localises to the cytoplasm. It catalyses the reaction a ribonucleoside 5'-phosphate + H2O = a ribonucleoside + phosphate. Functionally, nucleotidase that shows phosphatase activity on nucleoside 5'-monophosphates. The chain is 5'-nucleotidase SurE from Moorella thermoacetica (strain ATCC 39073 / JCM 9320).